We begin with the raw amino-acid sequence, 379 residues long: ATP phosphoribosyltransferase regulatory subunit (379 aa).

The protein belongs to the class-II aminoacyl-tRNA synthetase family. HisZ subfamily. In terms of assembly, heteromultimer composed of HisG and HisZ subunits.

Its subcellular location is the cytoplasm. It participates in amino-acid biosynthesis; L-histidine biosynthesis; L-histidine from 5-phospho-alpha-D-ribose 1-diphosphate: step 1/9. Its function is as follows. Required for the first step of histidine biosynthesis. May allow the feedback regulation of ATP phosphoribosyltransferase activity by histidine. The protein is ATP phosphoribosyltransferase regulatory subunit of Gluconobacter oxydans (strain 621H) (Gluconobacter suboxydans).